The chain runs to 192 residues: Glutaredoxin-C9 (192 aa).

Residues 89 to 191 (YERVARMASG…PLLKQAGALW (103 aa)) enclose the Glutaredoxin domain. Cysteines 109 and 112 form a disulfide. Positions 189–192 (ALWL) match the Responsive for interaction with TGA factors motif.

The protein belongs to the glutaredoxin family. CC-type subfamily.

It localises to the cytoplasm. It is found in the nucleus. Its function is as follows. Has a glutathione-disulfide oxidoreductase activity in the presence of NADPH and glutathione reductase. Reduces low molecular weight disulfides and proteins. The polypeptide is Glutaredoxin-C9 (GRXC9) (Oryza sativa subsp. japonica (Rice)).